The sequence spans 95 residues: MSNVYWPLYEVFVRGKQGLSHRHVGSLHAADERMALENARDAYTRRSEGCSIWVVKASEIVASQPEERGEFFDPAESKVYRHPTFYTIPDGIEHM.

Homotrimer. Forms a stable heterodimer with PaaC. Probably forms an oligomer with PaaAC.

It functions in the pathway aromatic compound metabolism; phenylacetate degradation. Functionally, component of 1,2-phenylacetyl-CoA epoxidase multicomponent enzyme system which catalyzes the reduction of phenylacetyl-CoA (PA-CoA) to form 1,2-epoxyphenylacetyl-CoA. The subunit B may play a regulatory role or be directly involved in electron transport. This chain is 1,2-phenylacetyl-CoA epoxidase, subunit B (paaB), found in Escherichia coli (strain K12).